The sequence spans 260 residues: Indole-3-glycerol phosphate synthase (260 aa).

It belongs to the TrpC family.

It catalyses the reaction 1-(2-carboxyphenylamino)-1-deoxy-D-ribulose 5-phosphate + H(+) = (1S,2R)-1-C-(indol-3-yl)glycerol 3-phosphate + CO2 + H2O. The protein operates within amino-acid biosynthesis; L-tryptophan biosynthesis; L-tryptophan from chorismate: step 4/5. The sequence is that of Indole-3-glycerol phosphate synthase from Koribacter versatilis (strain Ellin345).